We begin with the raw amino-acid sequence, 417 residues long: MLAFKSDFLNIMSERGFIHQISDEKGLDALFSKEVVSAYIGFDPTASSLHAGSLLQIMMLYWLQKTGHRPIVLMGGGTGLIGDPSFKDEARRLLTQDDIAANIADIKKVFARYLTFGERETDSCIVNNAEWLCTLNYLEFLRDIGKHFSVNRMLSFDSVRLRLEREHSLSFLEFNYMILQAYDFVELYKRYGLRMQMGGSDQWGNIINGIELGHRLGTPQLYALTSPLLTTSSGAKMGKSLNGAVWLNADMLSPYQFWQYWRNTEDADVTRFLKLYTPLPMDEILKLSALQGTEINEAKKILATEITAMLHGRDLANAVAETARKTFEERTLGENLPTFEINANDLKMGTGLLILLVQAGLSKSNSEARRHIQGGGVRVNDHIIEDETHLIREEDINAQGIIKLSFGKKKHVLIKPL.

Residue Y39 coordinates L-tyrosine. A 'HIGH' region motif is present at residues 44–53 (PTASSLHAGS). Y176 and Q180 together coordinate L-tyrosine. Positions 236–240 (KMGKS) match the 'KMSKS' region motif. K239 is a binding site for ATP. The region spanning 350 to 417 (TGLLILLVQA…KKKHVLIKPL (68 aa)) is the S4 RNA-binding domain.

This sequence belongs to the class-I aminoacyl-tRNA synthetase family. TyrS type 1 subfamily. As to quaternary structure, homodimer.

Its subcellular location is the cytoplasm. The catalysed reaction is tRNA(Tyr) + L-tyrosine + ATP = L-tyrosyl-tRNA(Tyr) + AMP + diphosphate + H(+). Its function is as follows. Catalyzes the attachment of tyrosine to tRNA(Tyr) in a two-step reaction: tyrosine is first activated by ATP to form Tyr-AMP and then transferred to the acceptor end of tRNA(Tyr). The sequence is that of Tyrosine--tRNA ligase from Bartonella henselae (strain ATCC 49882 / DSM 28221 / CCUG 30454 / Houston 1) (Rochalimaea henselae).